Here is a 492-residue protein sequence, read N- to C-terminus: Protein nucleotidyltransferase YdiU (492 aa).

Positions 88, 90, 91, 111, 123, 124, 174, and 181 each coordinate ATP. Aspartate 250 acts as the Proton acceptor in catalysis. Mg(2+) is bound by residues asparagine 251 and aspartate 260. Aspartate 260 provides a ligand contact to ATP.

This sequence belongs to the SELO family. It depends on Mg(2+) as a cofactor. Mn(2+) is required as a cofactor.

The catalysed reaction is L-seryl-[protein] + ATP = 3-O-(5'-adenylyl)-L-seryl-[protein] + diphosphate. The enzyme catalyses L-threonyl-[protein] + ATP = 3-O-(5'-adenylyl)-L-threonyl-[protein] + diphosphate. It catalyses the reaction L-tyrosyl-[protein] + ATP = O-(5'-adenylyl)-L-tyrosyl-[protein] + diphosphate. It carries out the reaction L-histidyl-[protein] + UTP = N(tele)-(5'-uridylyl)-L-histidyl-[protein] + diphosphate. The catalysed reaction is L-seryl-[protein] + UTP = O-(5'-uridylyl)-L-seryl-[protein] + diphosphate. The enzyme catalyses L-tyrosyl-[protein] + UTP = O-(5'-uridylyl)-L-tyrosyl-[protein] + diphosphate. Nucleotidyltransferase involved in the post-translational modification of proteins. It can catalyze the addition of adenosine monophosphate (AMP) or uridine monophosphate (UMP) to a protein, resulting in modifications known as AMPylation and UMPylation. This is Protein nucleotidyltransferase YdiU from Rhodopseudomonas palustris (strain BisB5).